A 291-amino-acid chain; its full sequence is Taste receptor type 2 member 16 (291 aa).

A topological domain (extracellular) is located at residue Met1. A helical transmembrane segment spans residues 2–22 (IPIQLTVFFMIIYVLESLTII). At 23–41 (VQSSLIVAVLGREWLQVRR) the chain is on the cytoplasmic side. A helical membrane pass occupies residues 42-62 (LMPVDMILISLGISRFCLQWA). The Extracellular segment spans residues 63–84 (SMLNBFCSYFNLNYVLCNLTIT). N-linked (GlcNAc...) asparagine glycosylation occurs at Asn80. Residues 85-105 (WEFFNILTFWLNSLLTVFYCI) form a helical membrane-spanning segment. Residues 106-125 (KVSSFTHHIFLWLRWRILRL) are Cytoplasmic-facing. A helical membrane pass occupies residues 126-146 (FPWILLGSLMITCVTIIPSAI). Residues 147-182 (GNYIQIQLLTMEHLPRNSTVTDKLEKFHQYEFQAHT) are Extracellular-facing. N-linked (GlcNAc...) asparagine glycosylation is present at Asn163. A helical transmembrane segment spans residues 183–203 (VALVIPFILFLASTILLMASL). The Cytoplasmic segment spans residues 204-228 (TKQIQHHSTGHCNPSMKAHFTALRS). Residues 229-249 (LAVLFIVFTSYFLTILITIIG) form a helical membrane-spanning segment. Residues 250-257 (TLFDRRCW) lie on the Extracellular side of the membrane. The helical transmembrane segment at 258–278 (LWVWEAFVYAFILMHSTSLML) threads the bilayer. Residues 279–291 (SSPTLKRILKGKC) lie on the Cytoplasmic side of the membrane.

Belongs to the G-protein coupled receptor T2R family. As to quaternary structure, interacts with RTP3 and RTP4.

Its subcellular location is the cell membrane. Receptor that may play a role in the perception of bitterness and is gustducin-linked. May play a role in sensing the chemical composition of the gastrointestinal content. The activity of this receptor may stimulate alpha gustducin, mediate PLC-beta-2 activation and lead to the gating of TRPM5. The polypeptide is Taste receptor type 2 member 16 (TAS2R16) (Gorilla gorilla gorilla (Western lowland gorilla)).